We begin with the raw amino-acid sequence, 129 residues long: Flagellar basal body rod protein FlgB (129 aa).

This sequence belongs to the flagella basal body rod proteins family. In terms of assembly, the basal body constitutes a major portion of the flagellar organelle and consists of a number of rings mounted on a central rod. In Gram-negative bacteria, at least four rings, L, P, S and M are present, whereas Gram-positive bacteria lack the L and P rings. The rod consists of about 26 subunits of FlgG in the distal portion, and FlgB, FlgC and FlgF build up the proximal portion of the rod with about 6 subunits each. Rod assembly occurs by export via the flagellum-specific pathway of its constituent proteins and by their incorporation into the rod structure in the probable order of FlgB, FlgC, FlgF and FlgG. Another protein, FliE, also assembles onto the stable rod structure.

Its subcellular location is the bacterial flagellum basal body. Its function is as follows. Structural component of flagellum, the bacterial motility apparatus. Part of the rod structure of flagellar basal body. The protein is Flagellar basal body rod protein FlgB (flgB) of Bacillus subtilis (strain 168).